The chain runs to 2274 residues: Adenomatous polyposis coli protein 2 (2274 aa).

A coiled-coil region spans residues 5-59 (MASYEQLVRQVEALKAENTHLRQELRDNSSHLSKLETETSGMKEVLKHLQGKLEQ). 2 disordered regions span residues 97 to 120 (GPEPAARTPEGSPVHGSGPSKDSF) and 248 to 269 (VEEEQEAEVPTHPEDGTPQPGN). 6 ARM repeats span residues 301 to 341 (PESC…GAKD), 472 to 511 (ANKATLCARRGCMEAIVAQLGSESEELHQVVSSILRNLSW), 515 to 555 (INSK…NLSA), 557 to 602 (STEN…NVSS), 608 to 647 (EDYRQVLRDHNCLQTLLQHLTSHSLTIVSNACGTLWNLSA), and 650 to 689 (PRDQELLWDLGAVGMLRNLVHSKHKMIAMGSAAALRNLLA). The stretch at 832–856 (AAKAKAKLALAVARIDRLVEDISAL) forms a coiled coil. 3 disordered regions span residues 859-901 (SSDD…GSRA), 1061-1143 (CSSL…NCVQ), and 1165-1216 (SIAS…TSQF). Residues 861–870 (DDSFSLSSGD) show a composition bias toward low complexity. Copy 1 of the repeat occupies 1049 to 1068 (LVAQDGPMSLSRCSSLSSLS). Residues 1049 to 1565 (LVAQDGPMSL…SLTSSASSLS (517 aa)) form a 5 X 20 AA approximate repeat of F-X-V-E-X-T-P-X-C-F-S-R-X-S-S-L-S-S-L-S region. The interaction with CTNNB1 stretch occupies residues 1049–1565 (LVAQDGPMSL…SLTSSASSLS (517 aa)). A compositionally biased stretch (polar residues) spans 1077 to 1086 (QAENLDSDSS). The segment covering 1092–1103 (EAGPGEAELGRA) has biased composition (low complexity). Positions 1133 to 1143 (TPSSSSENCVQ) are enriched in polar residues. Repeat 2 spans residues 1140–1159 (NCVQETPLVLSRCSSVSSLG). Repeat unit 3 spans residues 1250-1269 (FTVEKPDENFSCASSLSALA). Disordered stretches follow at residues 1290-1323 (ERAVGGGGHRRRDEAASRLDGPAPAGSRARSATD), 1368-1480 (RGDD…LQSL), 1493-1631 (FYDS…DIRP), 1699-2003 (STLQ…RGRP), 2022-2122 (PRQP…IKDE), and 2135-2274 (TALP…SLLE). The span at 1374–1397 (TDSAEGTPVNFSSAASLSDETLQG) shows a compositional bias: polar residues. Repeat unit 4 spans residues 1375-1394 (DSAEGTPVNFSSAASLSDET). Residues 1399 to 1411 (SRDKPAGPGDRQK) are compositionally biased toward basic and acidic residues. Positions 1455–1470 (RPQSARSNRDSSCQTR) are enriched in polar residues. Positions 1517 to 1529 (LKREKPAGRKETP) are enriched in basic and acidic residues. Copy 5 of the repeat occupies 1546–1565 (LIVDETPPCYSLTSSASSLS). Residues 1556–1574 (SLTSSASSLSEPEAPEQPA) show a composition bias toward low complexity. Phosphoserine is present on residues Ser1563 and Ser1565. A compositionally biased stretch (basic residues) spans 1608–1624 (PRRRTQVPGSRRRKPRA). Composition is skewed to low complexity over residues 1780-1795 (SGPCTTPKKTGTSGTT) and 1839-1868 (LAKTPSSSSSQTSPASQPLPRRSPLATPTG). A required for localization to microtubules and function in microtubule stabilization region spans residues 1792 to 1871 (SGTTQPETVT…PLATPTGGPL (80 aa)). Ser1861 is subject to Phosphoserine. Residues 1910 to 1921 (RVPPPLARPSPE) are compositionally biased toward pro residues. Low complexity-rich tracts occupy residues 1945 to 1955 (RMASARSSGSE) and 1983 to 1997 (LSSADSTASTSQAAS). Positions 2037 to 2114 (GLAPLAPRRT…PLPRVAPPGT (78 aa)) are interaction with MAPRE1 and MAPRE3. Residues 2165-2179 (DVATSKTNSSTSPSL) are compositionally biased toward polar residues.

The protein belongs to the adenomatous polyposis coli (APC) family. Interacts with PSRC1. Interacts with MAPRE3. Interacts with APC, CTNNB1, TP53BP2, MAPRE1 and possibly with AXIN2. As to expression, expressed in brain and other neural tissues.

It localises to the cytoplasm. It is found in the cytoskeleton. The protein localises to the golgi apparatus. The protein resides in the perinuclear region. Its function is as follows. Stabilizes microtubules and may regulate actin fiber dynamics through the activation of Rho family GTPases. May also function in Wnt signaling by promoting the rapid degradation of CTNNB1. The polypeptide is Adenomatous polyposis coli protein 2 (Apc2) (Mus musculus (Mouse)).